Reading from the N-terminus, the 1179-residue chain is Calcium-activated potassium channel subunit alpha-1 (1179 aa).

Positions 1 to 24 (MANGGGGGGGSSGGGGGGGGGGSG) are enriched in gly residues. The tract at residues 1-62 (MANGGGGGGG…SSSSSSSSSV (62 aa)) is disordered. At 1 to 87 (MANGGGGGGG…VPCDSRGQRM (87 aa)) the chain is on the extracellular side. The segment covering 41-61 (SSSSSSSSSSSSSSSSSSSSS) has biased composition (low complexity). A helical membrane pass occupies residues 88–108 (WWAFLASSMVTFFGGLFIILL). Over 109–179 (WRTLKYLWTV…MISAQTLTGR (71 aa)) the chain is Cytoplasmic. Residues Cys-119, Cys-120, and Cys-122 are each lipidated (S-palmitoyl cysteine). The helical transmembrane segment at 180 to 200 (VLVVLVFALSIGALVIYFIDS) threads the bilayer. The Extracellular portion of the chain corresponds to 201 to 215 (SNPIESCQNFYKDFT). The chain crosses the membrane as a helical span at residues 216-236 (LQIDMAFNVFFLLYFGLRFIA). The Cytoplasmic portion of the chain corresponds to 237–240 (ANDK). Residues 241-261 (LWFWLEVNSVVDFFTVPPVFV) form a helical membrane-spanning segment. Residues 262 to 265 (SVYL) are Extracellular-facing. A helical; Voltage-sensor membrane pass occupies residues 266–286 (NRSWLGLRFLRALRLIQFSEI). Over 287 to 301 (LQFLNILKTSNSIKL) the chain is Cytoplasmic. Residues 302–322 (VNLLSIFISTWLTAAGFIHLV) form a helical membrane-spanning segment. The Extracellular segment spans residues 323–336 (ENSGDPWENFQNNQ). An intramembrane region (pore-forming) is located at residues 337-359 (ALTYWECVYLLMVTMSTVGYGDV). The Selectivity for potassium signature appears at 353 to 356 (TVGY). Topologically, residues 360 to 368 (YAKTTLGRL) are extracellular. The helical transmembrane segment at 369–389 (FMVFFILGGLAMFASYVPEII) threads the bilayer. At 390–1179 (ELIGNRKKYG…KQKYVQEERL (790 aa)) the chain is on the cytoplasmic side. The region spanning 408-550 (RKHIVVCGHI…WNWKEGDDAI (143 aa)) is the RCK N-terminal 1 domain. Residues Glu-440, Gln-463, and Glu-465 each coordinate Mg(2+). The interval 557-577 (LGFIAQSCLAQGLSTMLANLF) is segment S7. Positions 614-634 (LSFPTVCELCFVKLKLLMIAI) are segment S8. The heme-binding motif stretch occupies residues 678 to 682 (CKACH). The disordered stretch occupies residues 702 to 730 (EQPSTLSPKKKQRNGGMRNSPNSSPKLMR). Thr-706 bears the Phosphothreonine mark. Phosphoserine is present on residues Ser-708, Ser-721, and Ser-725. Residues 780–800 (VLSGHVVVCIFGDVSSALIGL) form a segment S9 region. Positions 782–926 (SGHVVVCIFG…MDRSSPDNSP (145 aa)) constitute an RCK N-terminal 2 domain. Residue Thr-913 is modified to Phosphothreonine. A phosphoserine mark is found at Ser-921 and Ser-925. The Calcium bowl signature appears at 946-968 (TELVNDTNVQFLDQDDDDDPDTE). Ca(2+) contacts are provided by Gln-955, Asp-958, Asp-961, and Asp-963. Residues 975 to 995 (FACGTAFAVSVLDSLMSATYF) are segment S10. Residues 1129 to 1154 (RASLSHSSHSSQSSSKKSSSVHSIPS) show a composition bias toward low complexity. The interval 1129–1179 (RASLSHSSHSSQSSSKKSSSVHSIPSTANRQNRPKSRESRDKQKYVQEERL) is disordered. Residues 1163-1179 (KSRESRDKQKYVQEERL) are compositionally biased toward basic and acidic residues. Ser-1164 and Ser-1167 each carry phosphoserine.

The protein belongs to the potassium channel family. Calcium-activated (TC 1.A.1.3) subfamily. KCa1.1/KCNMA1 sub-subfamily. In terms of assembly, homotetramer; which constitutes the calcium-activated potassium channel. Interacts with beta subunits KCNMB1, KCNMB2, KCNMB3 and KCNMB4. Interacts with gamma subunits LRRC26, LRRC38, LRRC52 and LRRC55. Beta and gamma subunits are accessory, and modulate its activity. Interacts with RAB11B. Post-translationally, phosphorylated. Phosphorylation by kinases such as PKA and/or PKG. In smooth muscles, phosphorylation affects its activity. In terms of processing, palmitoylation by ZDHHC22 and ZDHHC23 within the intracellular linker between the S0 and S1 transmembrane domains regulates localization to the plasma membrane. Depalmitoylated by LYPLA1 and LYPLAL1, leading to retard exit from the trans-Golgi network.

It is found in the cell membrane. The protein resides in the endoplasmic reticulum membrane. The catalysed reaction is K(+)(in) = K(+)(out). Its activity is regulated as follows. Ethanol and carbon monoxide-bound heme increase channel activation. Heme inhibits channel activation. In terms of biological role, potassium channel activated by both membrane depolarization or increase in cytosolic Ca(2+) that mediates export of K(+). It is also activated by the concentration of cytosolic Mg(2+). Its activation dampens the excitatory events that elevate the cytosolic Ca(2+) concentration and/or depolarize the cell membrane. It therefore contributes to repolarization of the membrane potential. Plays a key role in controlling excitability in a number of systems, such as regulation of the contraction of smooth muscle, the tuning of hair cells in the cochlea, regulation of transmitter release, and innate immunity. In smooth muscles, its activation by high level of Ca(2+), caused by ryanodine receptors in the sarcoplasmic reticulum, regulates the membrane potential. In cochlea cells, its number and kinetic properties partly determine the characteristic frequency of each hair cell and thereby helps to establish a tonotopic map. Kinetics of KCNMA1 channels are determined by alternative splicing, phosphorylation status and its combination with modulating beta subunits. Highly sensitive to both iberiotoxin (IbTx) and charybdotoxin (CTX). Potassium channel activated by both membrane depolarization or increase in cytosolic Ca(2+) that mediates export of K(+). This is Calcium-activated potassium channel subunit alpha-1 (KCNMA1) from Oryctolagus cuniculus (Rabbit).